The primary structure comprises 384 residues: Cysteine desulfurase (384 aa).

Residues 74 to 75 (GT), Asn154, Gln180, and 200 to 202 (SGH) each bind pyridoxal 5'-phosphate. Lys203 carries the N6-(pyridoxal phosphate)lysine modification. Thr238 serves as a coordination point for pyridoxal 5'-phosphate. The active-site Cysteine persulfide intermediate is Cys325. Cys325 serves as a coordination point for [2Fe-2S] cluster.

It belongs to the class-V pyridoxal-phosphate-dependent aminotransferase family. NifS/IscS subfamily. As to quaternary structure, homodimer. Pyridoxal 5'-phosphate serves as cofactor.

It catalyses the reaction (sulfur carrier)-H + L-cysteine = (sulfur carrier)-SH + L-alanine. Functionally, catalyzes the removal of elemental sulfur atoms from cysteine to produce alanine. Seems to participate in the biosynthesis of the nitrogenase metalloclusters by providing the inorganic sulfur required for the Fe-S core formation. This is Cysteine desulfurase from Rhodobacter capsulatus (Rhodopseudomonas capsulata).